The sequence spans 730 residues: Tubulin polyglutamylase ttll-5 (730 aa).

The region spanning Arg120–Ser478 is the TTL domain. ATP-binding positions include Ser278–Leu281, Lys291, and Asp293. The interval Lys594–Ser618 is disordered. The span at Ser600–Ser618 shows a compositional bias: low complexity.

It belongs to the tubulin--tyrosine ligase family. Expressed in body wall muscles. Not expressed in sensory neurons.

It carries out the reaction L-glutamyl-[protein] + L-glutamate + ATP = gamma-L-glutamyl-L-glutamyl-[protein] + ADP + phosphate + H(+). Its function is as follows. Polyglutamylase which preferentially modifies alpha-tubulin. Involved in the side-chain initiation step of the polyglutamylation reaction rather than in the elongation step. Together with ttll-4 and ttll-11, required for male mating. Probably by regulating microtubule stability via the glutamylation of tubulin, negatively regulates axon regrowth after injury in PLM neurons. In Caenorhabditis elegans, this protein is Tubulin polyglutamylase ttll-5.